Consider the following 444-residue polypeptide: Protein EVI2B (444 aa).

An N-terminal signal peptide occupies residues 1 to 23 (MEFKYLVFIVLCQYLDNTFFSET). The Extracellular portion of the chain corresponds to 24-203 (EAITTEQQSL…GTAHKNNHNA (180 aa)). 4 N-linked (GlcNAc...) asparagine glycosylation sites follow: Asn-63, Asn-94, Asn-104, and Asn-127. Polar residues-rich tracts occupy residues 104–131 (NNSLPQTSPSGFTLTNQPSPSTYNSTGQ) and 160–171 (THNQPTKSTPTI). A disordered region spans residues 104–197 (NNSLPQTSPS…EPPSGKGTAH (94 aa)). The segment covering 177-187 (TPPPPPPPLTS) has biased composition (pro residues). The chain crosses the membrane as a helical span at residues 204 to 224 (IAAILIGTIIISMLVAILMII). Residues 225–444 (LWKYLRKPVL…SLPPPPTELL (220 aa)) lie on the Cytoplasmic side of the membrane. At Thr-250 the chain carries Phosphothreonine. Phosphoserine occurs at positions 269, 272, 279, and 295. 2 stretches are compositionally biased toward polar residues: residues 318-332 (SEDSADGSTVGTAVS) and 361-370 (SPLPNDSINP). Disordered stretches follow at residues 318–337 (SEDSADGSTVGTAVSSDDAD) and 361–444 (SPLP…TELL).

As to expression, expressed in myeloid and lymphoid progenitors and increased in mature hematopoietic populations with the highest levels in granulocytes.

The protein localises to the membrane. In terms of biological role, required for granulocyte differentiation and functionality of hematopoietic progenitor cells through the control of cell cycle progression and survival of hematopoietic progenitor cells. In Mus musculus (Mouse), this protein is Protein EVI2B.